A 158-amino-acid chain; its full sequence is C-type lectin galactose-binding isoform (158 aa).

Positions 1 to 23 are cleaved as a signal peptide; the sequence is MGRFLLVTLSLLVVAFSLNGANS. Intrachain disulfides connect cysteine 26–cysteine 37, cysteine 54–cysteine 154, and cysteine 129–cysteine 146. The C-type lectin domain maps to 33–155; the sequence is RNGFCYKVFN…CTALRPFLCQ (123 aa). Residues glutamine 119, aspartate 121, and glutamate 127 each coordinate Ca(2+). Positions 119-121 match the Galactose-binding motif; the sequence is QPD. The N-linked (GlcNAc...) asparagine glycan is linked to asparagine 134. The Ca(2+) site is built by asparagine 142 and aspartate 143.

This sequence belongs to the true venom lectin family. As to quaternary structure, homodimer; disulfide-linked. In terms of tissue distribution, expressed by the venom gland.

It localises to the secreted. Its function is as follows. Galactose-binding lectin that binds to and agglutinates erythrocytes in a calcium-dependent manner. This chain is C-type lectin galactose-binding isoform, found in Pseudechis porphyriacus (Red-bellied black snake).